The sequence spans 578 residues: Protein SIA1 (578 aa).

An N-terminal signal peptide occupies residues 1 to 28 (MFRNRRILLYARRFFLVWICFLFITSWS).

May be involved in the activation of the plasma membrane proton-ATPase by glucose. The chain is Protein SIA1 (SIA1) from Kluyveromyces lactis (strain ATCC 8585 / CBS 2359 / DSM 70799 / NBRC 1267 / NRRL Y-1140 / WM37) (Yeast).